The sequence spans 369 residues: tRNA/tmRNA (uracil-C(5))-methyltransferase (369 aa).

The S-adenosyl-L-methionine site is built by glutamine 190, tyrosine 218, asparagine 223, glutamate 239, and aspartate 301. Cysteine 326 serves as the catalytic Nucleophile. Catalysis depends on glutamate 360, which acts as the Proton acceptor.

This sequence belongs to the class I-like SAM-binding methyltransferase superfamily. RNA M5U methyltransferase family. TrmA subfamily.

It carries out the reaction uridine(54) in tRNA + S-adenosyl-L-methionine = 5-methyluridine(54) in tRNA + S-adenosyl-L-homocysteine + H(+). The enzyme catalyses uridine(341) in tmRNA + S-adenosyl-L-methionine = 5-methyluridine(341) in tmRNA + S-adenosyl-L-homocysteine + H(+). Functionally, dual-specificity methyltransferase that catalyzes the formation of 5-methyluridine at position 54 (m5U54) in all tRNAs, and that of position 341 (m5U341) in tmRNA (transfer-mRNA). The chain is tRNA/tmRNA (uracil-C(5))-methyltransferase from Vibrio vulnificus (strain YJ016).